Here is a 216-residue protein sequence, read N- to C-terminus: ATP phosphoribosyltransferase (216 aa).

The protein belongs to the ATP phosphoribosyltransferase family. Short subfamily. As to quaternary structure, heteromultimer composed of HisG and HisZ subunits.

The protein localises to the cytoplasm. The catalysed reaction is 1-(5-phospho-beta-D-ribosyl)-ATP + diphosphate = 5-phospho-alpha-D-ribose 1-diphosphate + ATP. The protein operates within amino-acid biosynthesis; L-histidine biosynthesis; L-histidine from 5-phospho-alpha-D-ribose 1-diphosphate: step 1/9. Its function is as follows. Catalyzes the condensation of ATP and 5-phosphoribose 1-diphosphate to form N'-(5'-phosphoribosyl)-ATP (PR-ATP). Has a crucial role in the pathway because the rate of histidine biosynthesis seems to be controlled primarily by regulation of HisG enzymatic activity. The protein is ATP phosphoribosyltransferase of Thiobacillus denitrificans (strain ATCC 25259 / T1).